We begin with the raw amino-acid sequence, 256 residues long: Acetoacetate decarboxylase 3 (256 aa).

Lys-110 serves as the catalytic Schiff-base intermediate with acetoacetate.

The protein belongs to the ADC family.

The catalysed reaction is acetoacetate + H(+) = acetone + CO2. Functionally, catalyzes the conversion of acetoacetate to acetone and carbon dioxide. In Mesorhizobium japonicum (strain LMG 29417 / CECT 9101 / MAFF 303099) (Mesorhizobium loti (strain MAFF 303099)), this protein is Acetoacetate decarboxylase 3.